The following is a 371-amino-acid chain: Putative glutamate--cysteine ligase 2 (371 aa).

Belongs to the glutamate--cysteine ligase type 2 family. YbdK subfamily.

It catalyses the reaction L-cysteine + L-glutamate + ATP = gamma-L-glutamyl-L-cysteine + ADP + phosphate + H(+). ATP-dependent carboxylate-amine ligase which exhibits weak glutamate--cysteine ligase activity. The chain is Putative glutamate--cysteine ligase 2 from Burkholderia thailandensis (strain ATCC 700388 / DSM 13276 / CCUG 48851 / CIP 106301 / E264).